Reading from the N-terminus, the 920-residue chain is Isoleucine--tRNA ligase (920 aa).

Positions 57–67 (PYANGDIHLGH) match the 'HIGH' region motif. Residue Glu560 participates in L-isoleucyl-5'-AMP binding. A 'KMSKS' region motif is present at residues 601-605 (KMSKS). Lys604 is an ATP binding site. Zn(2+)-binding residues include Cys890, Cys893, Cys910, and Cys913.

Belongs to the class-I aminoacyl-tRNA synthetase family. IleS type 1 subfamily. Monomer. It depends on Zn(2+) as a cofactor.

Its subcellular location is the cytoplasm. The enzyme catalyses tRNA(Ile) + L-isoleucine + ATP = L-isoleucyl-tRNA(Ile) + AMP + diphosphate. In terms of biological role, catalyzes the attachment of isoleucine to tRNA(Ile). As IleRS can inadvertently accommodate and process structurally similar amino acids such as valine, to avoid such errors it has two additional distinct tRNA(Ile)-dependent editing activities. One activity is designated as 'pretransfer' editing and involves the hydrolysis of activated Val-AMP. The other activity is designated 'posttransfer' editing and involves deacylation of mischarged Val-tRNA(Ile). In Caldicellulosiruptor bescii (strain ATCC BAA-1888 / DSM 6725 / KCTC 15123 / Z-1320) (Anaerocellum thermophilum), this protein is Isoleucine--tRNA ligase.